Reading from the N-terminus, the 189-residue chain is UPF0301 protein HRM2_24640 (189 aa).

Belongs to the UPF0301 (AlgH) family.

The polypeptide is UPF0301 protein HRM2_24640 (Desulforapulum autotrophicum (strain ATCC 43914 / DSM 3382 / VKM B-1955 / HRM2) (Desulfobacterium autotrophicum)).